The chain runs to 20 residues: Cytochrome c oxidase subunit 6A1, mitochondrial (20 aa).

Belongs to the cytochrome c oxidase subunit 6A family. As to quaternary structure, component of the cytochrome c oxidase (complex IV, CIV), a multisubunit enzyme composed of 14 subunits. The complex is composed of a catalytic core of 3 subunits MT-CO1, MT-CO2 and MT-CO3, encoded in the mitochondrial DNA, and 11 supernumerary subunits COX4I, COX5A, COX5B, COX6A, COX6B, COX6C, COX7A, COX7B, COX7C, COX8 and NDUFA4, which are encoded in the nuclear genome. The complex exists as a monomer or a dimer and forms supercomplexes (SCs) in the inner mitochondrial membrane with NADH-ubiquinone oxidoreductase (complex I, CI) and ubiquinol-cytochrome c oxidoreductase (cytochrome b-c1 complex, complex III, CIII), resulting in different assemblies (supercomplex SCI(1)III(2)IV(1) and megacomplex MCI(2)III(2)IV(2)). In terms of tissue distribution, liver specific isoform.

The protein localises to the mitochondrion inner membrane. It participates in energy metabolism; oxidative phosphorylation. Component of the cytochrome c oxidase, the last enzyme in the mitochondrial electron transport chain which drives oxidative phosphorylation. The respiratory chain contains 3 multisubunit complexes succinate dehydrogenase (complex II, CII), ubiquinol-cytochrome c oxidoreductase (cytochrome b-c1 complex, complex III, CIII) and cytochrome c oxidase (complex IV, CIV), that cooperate to transfer electrons derived from NADH and succinate to molecular oxygen, creating an electrochemical gradient over the inner membrane that drives transmembrane transport and the ATP synthase. Cytochrome c oxidase is the component of the respiratory chain that catalyzes the reduction of oxygen to water. Electrons originating from reduced cytochrome c in the intermembrane space (IMS) are transferred via the dinuclear copper A center (CU(A)) of subunit 2 and heme A of subunit 1 to the active site in subunit 1, a binuclear center (BNC) formed by heme A3 and copper B (CU(B)). The BNC reduces molecular oxygen to 2 water molecules unsing 4 electrons from cytochrome c in the IMS and 4 protons from the mitochondrial matrix. The polypeptide is Cytochrome c oxidase subunit 6A1, mitochondrial (COX6A1) (Ovis aries (Sheep)).